Here is a 174-residue protein sequence, read N- to C-terminus: Shikimate kinase (174 aa).

Glycine 14 to threonine 19 is a binding site for ATP. Serine 18 contacts Mg(2+). Substrate contacts are provided by aspartate 36, arginine 60, and glycine 82. Residue arginine 120 participates in ATP binding. A substrate-binding site is contributed by arginine 139. Glutamine 156 lines the ATP pocket.

It belongs to the shikimate kinase family. As to quaternary structure, monomer. It depends on Mg(2+) as a cofactor.

It is found in the cytoplasm. It carries out the reaction shikimate + ATP = 3-phosphoshikimate + ADP + H(+). It functions in the pathway metabolic intermediate biosynthesis; chorismate biosynthesis; chorismate from D-erythrose 4-phosphate and phosphoenolpyruvate: step 5/7. Catalyzes the specific phosphorylation of the 3-hydroxyl group of shikimic acid using ATP as a cosubstrate. This Vibrio cholerae serotype O1 (strain ATCC 39541 / Classical Ogawa 395 / O395) protein is Shikimate kinase.